The sequence spans 42 residues: uncharacterized protein (42 aa).

Residues 1–42 are disordered; that stretch reads MTTGKPQSFEKMRTPFPGRSKAKGPQSDIIPSAPPNTPVTEH. Over residues 32–42 the composition is skewed to pro residues; that stretch reads SAPPNTPVTEH.

This is an uncharacterized protein from Schizosaccharomyces pombe (strain 972 / ATCC 24843) (Fission yeast).